The sequence spans 97 residues: MSRKCELTGVGVLYGNNVSHSQRKTRRRFEPNLRSVKFTSDITAGEYRLSVNARCISSVEKAGGFDAYILKADDNVLSSNARAIKKKIIQTKTAKSL.

This sequence belongs to the bacterial ribosomal protein bL28 family.

The polypeptide is Large ribosomal subunit protein bL28 (Rickettsia africae (strain ESF-5)).